Consider the following 87-residue polypeptide: Large ribosomal subunit protein uL23c (87 aa).

It belongs to the universal ribosomal protein uL23 family. Part of the 50S ribosomal subunit.

It localises to the plastid. It is found in the chloroplast. Functionally, binds to 23S rRNA. This Bigelowiella natans (Pedinomonas minutissima) protein is Large ribosomal subunit protein uL23c (rpl23).